Reading from the N-terminus, the 605-residue chain is Condensin-2 complex subunit H2 (605 aa).

Position 19 is a phosphothreonine (Thr19). 5 positions are modified to phosphoserine: Ser95, Ser200, Ser208, Ser228, and Ser232. The disordered stretch occupies residues 194–331 (LEPEGMSPME…PFDSLESKPF (138 aa)). Acidic residues predominate over residues 256–266 (GEDEDAEEAVE). Phosphoserine is present on residues Ser282, Ser284, Ser466, and Ser492.

The protein belongs to the CND2 H2 (condensin-2 subunit 2) family. Component of the condensin-2 complex, which contains the SMC2 and SMC4 heterodimer, and three non SMC subunits, NCAPG2, NCAPH2 and NCAPD3 that probably regulate the complex.

Its subcellular location is the nucleus. The protein resides in the chromosome. Functionally, regulatory subunit of the condensin-2 complex, a complex that seems to provide chromosomes with an additional level of organization and rigidity and in establishing mitotic chromosome architecture. May promote the resolution of double-strand DNA catenanes (intertwines) between sister chromatids. Condensin-mediated compaction likely increases tension in catenated sister chromatids, providing directionality for type II topoisomerase-mediated strand exchanges toward chromatid decatenation. Required for decatenation of chromatin bridges at anaphase. Early in neurogenesis, may play an essential role to ensure accurate mitotic chromosome condensation in neuron stem cells, ultimately affecting neuron pool and cortex size. Seems to have lineage-specific role in T-cell development. This is Condensin-2 complex subunit H2 (NCAPH2) from Homo sapiens (Human).